The primary structure comprises 648 residues: Threonine--tRNA ligase (648 aa).

Positions 1-63 constitute a TGS domain; that stretch reads MAQISLTFPD…TQDAAIAIHT (63 aa). Residues 247–544 are catalytic; the sequence is DHRKLGREMN…LIEEHAGKLP (298 aa). Zn(2+) contacts are provided by cysteine 344, histidine 395, and histidine 521.

Belongs to the class-II aminoacyl-tRNA synthetase family. In terms of assembly, homodimer. Zn(2+) serves as cofactor.

The protein localises to the cytoplasm. It catalyses the reaction tRNA(Thr) + L-threonine + ATP = L-threonyl-tRNA(Thr) + AMP + diphosphate + H(+). Its function is as follows. Catalyzes the attachment of threonine to tRNA(Thr) in a two-step reaction: L-threonine is first activated by ATP to form Thr-AMP and then transferred to the acceptor end of tRNA(Thr). Also edits incorrectly charged L-seryl-tRNA(Thr). The sequence is that of Threonine--tRNA ligase from Ruegeria sp. (strain TM1040) (Silicibacter sp.).